Here is a 589-residue protein sequence, read N- to C-terminus: Intermediate filament protein B (589 aa).

The tract at residues 1 to 84 is head; it reads SLKQSQESSE…LEATDKEKKE (84 aa). One can recognise an IF rod domain in the interval 81-433; it reads EKKEMQGLND…KMLEGEESRV (353 aa). Positions 85-116 are coil 1A; sequence MQGLNDRLGNYIDRVKKLEEQNRKLVADLDEL. Residues 117–130 are linker 1; that stretch reads RGRWGKDTSEIKIQ. The interval 131–268 is coil 1B; that stretch reads YSDSLRDARK…RVHEQEVKEL (138 aa). Residues 269-285 form a linker 12 region; it reads QALLAQAPADTREFFKN. Positions 286–433 are coil 2; the sequence is ELALAIRDIK…KMLEGEESRV (148 aa). The tract at residues 434 to 589 is tail; it reads GLRQMVEQVV…HTQKTIQTGQ (156 aa). The segment at 446–470 is disordered; sequence HSLQQQEDTDSTRNVRGEVSTKTTF. An LTD domain is found at 466-584; the sequence is TKTTFQRSAK…DERATHTQKT (119 aa).

This sequence belongs to the intermediate filament family. An and B can form homopolymers. In terms of tissue distribution, giant body muscle cells.

Its subcellular location is the cytoplasm. The chain is Intermediate filament protein B from Ascaris suum (Pig roundworm).